Reading from the N-terminus, the 428-residue chain is 3-phosphoshikimate 1-carboxyvinyltransferase (428 aa).

Residues Lys20, Ser21, and Arg25 each coordinate 3-phosphoshikimate. Lys20 lines the phosphoenolpyruvate pocket. Phosphoenolpyruvate is bound by residues Gly93 and Arg122. 3-phosphoshikimate is bound by residues Ser167, Gln169, Asp317, and Lys344. Position 169 (Gln169) interacts with phosphoenolpyruvate. The active-site Proton acceptor is Asp317. 2 residues coordinate phosphoenolpyruvate: Arg348 and Arg390.

This sequence belongs to the EPSP synthase family. Monomer.

It is found in the cytoplasm. It carries out the reaction 3-phosphoshikimate + phosphoenolpyruvate = 5-O-(1-carboxyvinyl)-3-phosphoshikimate + phosphate. It participates in metabolic intermediate biosynthesis; chorismate biosynthesis; chorismate from D-erythrose 4-phosphate and phosphoenolpyruvate: step 6/7. Functionally, catalyzes the transfer of the enolpyruvyl moiety of phosphoenolpyruvate (PEP) to the 5-hydroxyl of shikimate-3-phosphate (S3P) to produce enolpyruvyl shikimate-3-phosphate and inorganic phosphate. The sequence is that of 3-phosphoshikimate 1-carboxyvinyltransferase from Leptospira biflexa serovar Patoc (strain Patoc 1 / ATCC 23582 / Paris).